Consider the following 461-residue polypeptide: MMLLYYTLSFILLPVYFIIIFIRLLIGKEDIRRIQERFAIGKQRQNSALDFIQMSVNKEGFTDHKTTSYVDMHRNASLMYKLSLERSYAHSLVWIHAASVGEVMTALTLIHNISKLAPNVRFLITSWTNASAKILSTKLPKIATHQFLPIDNVIFTRKFLRNWQPDLGIFIESELWPCTINEGAKYCKLLLINARISNKSFKAWLKRKRFFQLIIKNFSKIIVQSERDLQKFNALGISDAMNLGNIKFANEKLLVNQEKLSKLILHLDNRRVLVFASTHPEDEEVILPIINNLKEQFIDCYIILIPRHPERIKSIINNCKLHHLSATAKSQNDLPVLNNDLYIVDRFGEMGLFFSVATISFIGGSFKQGGHNILEAAYFSNCIIFGPDMSKNTDIAKGILQNNAAIQIKNGKDLLNTLTSLLNANNALKLKTYRENALKFVENNQKKILDEYLQIIKQFLP.

The chain crosses the membrane as a helical; Signal-anchor span at residues 2–22 (MLLYYTLSFILLPVYFIIIFI). Positions 47 to 88 (SALDFIQMSVNKEGFTDHKTTSYVDMHRNASLMYKLSLERSY) constitute an RPE1 insert domain. Glutamate 102 functions as the Proton acceptor in the catalytic mechanism. Residues 306–307 (PR), 347–349 (FGE), and 372–375 (NILE) each bind CMP.

This sequence belongs to the glycosyltransferase group 1 family. Glycosyltransferase 30 subfamily.

It is found in the cell inner membrane. The catalysed reaction is lipid IVA (E. coli) + CMP-3-deoxy-beta-D-manno-octulosonate = alpha-Kdo-(2-&gt;6)-lipid IVA (E. coli) + CMP + H(+). It functions in the pathway bacterial outer membrane biogenesis; LPS core biosynthesis. Functionally, involved in lipopolysaccharide (LPS) biosynthesis. Catalyzes the transfer of 3-deoxy-D-manno-octulosonate (Kdo) residue(s) from CMP-Kdo to lipid IV(A), the tetraacyldisaccharide-1,4'-bisphosphate precursor of lipid A. This is 3-deoxy-D-manno-octulosonic acid transferase (waaA) from Rickettsia prowazekii (strain Madrid E).